A 641-amino-acid polypeptide reads, in one-letter code: Frizzled-1 (641 aa).

The N-terminal stretch at 1–68 (MAEEAVPSES…WLLEAPLLLG (68 aa)) is a signal peptide. The Extracellular portion of the chain corresponds to 69–316 (VRAQPAGQVS…PEELRFSRTW (248 aa)). Positions 74–99 (AGQVSGPGQQRPPPPQPQQGGQQYNG) are disordered. One can recognise an FZ domain in the interval 106-224 (PDHGYCQPIS…HGAGELCVGQ (119 aa)). Intrachain disulfides connect C111/C172, C119/C165, C156/C192, C182/C221, and C186/C209. A glycan (N-linked (GlcNAc...) asparagine) is linked at N125. N225 carries N-linked (GlcNAc...) asparagine glycosylation. The chain crosses the membrane as a helical span at residues 317 to 337 (IGIWSVLCCASTLFTVLTYLV). The Cytoplasmic segment spans residues 338–348 (DMRRFSYPERP). The helical transmembrane segment at 349–369 (IIFLSGCYTAVAVAYIAGFLL) threads the bilayer. The Extracellular segment spans residues 370–396 (EDRVVCNDKFAEDGARTVAQGTKKEGC). The helical transmembrane segment at 397-417 (TILFMMLYFFSMASSIWWVIL) threads the bilayer. Topologically, residues 418 to 439 (SLTWFLAAGMKWGHEAIEANSQ) are cytoplasmic. Residues 440–460 (YFHLAAWAVPAIKTITILALG) form a helical membrane-spanning segment. Topologically, residues 461-483 (QVDGDVLSGVCFVGLNNVDALRG) are extracellular. Residues 484–504 (FVLAPLFVYLFIGTSFLLAGF) traverse the membrane as a helical segment. Topologically, residues 505–530 (VSLFRIRTIMKHDGTKTEKLEKLMVR) are cytoplasmic. Residues 531 to 551 (IGVFSVLYTVPATIVIACYFY) form a helical membrane-spanning segment. Over 552 to 595 (EQAFRDQWERSWVAQSCKSYAIPCPHLQGGGGVPPHPPMSPDFT) the chain is Extracellular. The helical transmembrane segment at 596-616 (VFMIKYLMTLIVGITSGFWIW) threads the bilayer. At 617 to 641 (SGKTLNSWRKFYTRLTNSKQGETTV) the chain is on the cytoplasmic side. A Lys-Thr-X-X-X-Trp motif, mediates interaction with the PDZ domain of Dvl family members motif is present at residues 619–624 (KTLNSW). Residues 639–641 (TTV) carry the PDZ-binding motif.

The protein belongs to the G-protein coupled receptor Fz/Smo family. Interacts with MYOC. Interacts with WNT7B. Post-translationally, ubiquitinated by ZNRF3, leading to its degradation by the proteasome. As to expression, widely expressed. Most abundant in kidney, liver, uterus, ovary and heart. Lower levels seen in brain and intestine. Extremely low in calvaria, mammary glands and testis.

Its subcellular location is the cell membrane. In terms of biological role, receptor for Wnt proteins. Activated by WNT3A, WNT3, WNT1 and to a lesser extent WNT2, but apparently not by WNT4, WNT5A, WNT5B, WNT6 or WNT7A. Contradictory results have been reported for activation by WNT7B. Functions in the canonical Wnt/beta-catenin signaling pathway. The canonical Wnt/beta-catenin signaling pathway leads to the activation of disheveled proteins, inhibition of GSK-3 kinase, nuclear accumulation of beta-catenin and activation of Wnt target genes. A second signaling pathway involving PKC and calcium fluxes has been seen for some family members, but it is not yet clear if it represents a distinct pathway or if it can be integrated in the canonical pathway, as PKC seems to be required for Wnt-mediated inactivation of GSK-3 kinase. Both pathways seem to involve interactions with G-proteins. May be involved in transduction and intercellular transmission of polarity information during tissue morphogenesis and/or in differentiated tissues. In Rattus norvegicus (Rat), this protein is Frizzled-1 (Fzd1).